Reading from the N-terminus, the 223-residue chain is Putative archaetidylserine decarboxylase proenzyme (223 aa).

The active-site Schiff-base intermediate with substrate; via pyruvic acid is the Ser-183. Ser-183 carries the post-translational modification Pyruvic acid (Ser); by autocatalysis.

It belongs to the phosphatidylserine decarboxylase family. PSD-A subfamily. As to quaternary structure, heterodimer of a large membrane-associated beta subunit and a small pyruvoyl-containing alpha subunit. The cofactor is pyruvate. In terms of processing, is synthesized initially as an inactive proenzyme. Formation of the active enzyme involves a self-maturation process in which the active site pyruvoyl group is generated from an internal serine residue via an autocatalytic post-translational modification. Two non-identical subunits are generated from the proenzyme in this reaction, and the pyruvate is formed at the N-terminus of the alpha chain, which is derived from the carboxyl end of the proenzyme. The post-translation cleavage follows an unusual pathway, termed non-hydrolytic serinolysis, in which the side chain hydroxyl group of the serine supplies its oxygen atom to form the C-terminus of the beta chain, while the remainder of the serine residue undergoes an oxidative deamination to produce ammonia and the pyruvoyl prosthetic group on the alpha chain.

Its subcellular location is the cell membrane. It carries out the reaction archaetidylserine + H(+) = archaetidylethanolamine + CO2. Catalyzes the formation of archaetidylethanolamine (PtdEtn) from archaetidylserine (PtdSer). This chain is Putative archaetidylserine decarboxylase proenzyme, found in Methanothermobacter thermautotrophicus (strain ATCC 29096 / DSM 1053 / JCM 10044 / NBRC 100330 / Delta H) (Methanobacterium thermoautotrophicum).